We begin with the raw amino-acid sequence, 437 residues long: Protein RecA (437 aa).

69–76 (GPESSGKT) serves as a coordination point for ATP. Positions 343 to 437 (HDAAVRTSPD…GNGKSVKRKG (95 aa)) are disordered. Composition is skewed to polar residues over residues 350-371 (SPDTNSRKVSGTGAVHTTSGSP), 380-391 (GAVNNSRDSTGG), and 400-426 (LNLSVNRDVSTDTVSSKISDATHNQKP).

This sequence belongs to the RecA family.

The protein resides in the cytoplasm. Its function is as follows. Can catalyze the hydrolysis of ATP in the presence of single-stranded DNA, the ATP-dependent uptake of single-stranded DNA by duplex DNA, and the ATP-dependent hybridization of homologous single-stranded DNAs. It interacts with LexA causing its activation and leading to its autocatalytic cleavage. This is Protein RecA from Tropheryma whipplei (strain Twist) (Whipple's bacillus).